Reading from the N-terminus, the 663-residue chain is UvrABC system protein B (663 aa).

The region spanning 31-188 is the Helicase ATP-binding domain; the sequence is DNIEGGEKAQ…NDLVDIQFER (158 aa). Residue 44-51 participates in ATP binding; that stretch reads GATGTGKT. Positions 97–120 match the Beta-hairpin motif; it reads YYDYYQPEAYVPSSDTYIEKDSSV. A Helicase C-terminal domain is found at 435-601; sequence QMDDLLGEIN…TIKKDIRDLI (167 aa). The UVR domain maps to 627–662; that stretch reads QEAIKKLQKQMQEAAELLDFELAAQIRDMVLELKAM.

It belongs to the UvrB family. In terms of assembly, forms a heterotetramer with UvrA during the search for lesions. Interacts with UvrC in an incision complex.

It is found in the cytoplasm. In terms of biological role, the UvrABC repair system catalyzes the recognition and processing of DNA lesions. A damage recognition complex composed of 2 UvrA and 2 UvrB subunits scans DNA for abnormalities. Upon binding of the UvrA(2)B(2) complex to a putative damaged site, the DNA wraps around one UvrB monomer. DNA wrap is dependent on ATP binding by UvrB and probably causes local melting of the DNA helix, facilitating insertion of UvrB beta-hairpin between the DNA strands. Then UvrB probes one DNA strand for the presence of a lesion. If a lesion is found the UvrA subunits dissociate and the UvrB-DNA preincision complex is formed. This complex is subsequently bound by UvrC and the second UvrB is released. If no lesion is found, the DNA wraps around the other UvrB subunit that will check the other stand for damage. This is UvrABC system protein B from Streptococcus mutans serotype c (strain ATCC 700610 / UA159).